The chain runs to 483 residues: tRNA sulfurtransferase (483 aa).

One can recognise a THUMP domain in the interval 62-166 (PQICDALTRV…QDKLTLIKAR (105 aa)). ATP is bound by residues 184–185 (LI), Lys266, Gly288, and Gln297. A disulfide bridge links Cys345 with Cys457. Residues 405–483 (LADTDVLLDI…GYTNVKVYRP (79 aa)) enclose the Rhodanese domain. The Cysteine persulfide intermediate role is filled by Cys457.

It belongs to the ThiI family.

The protein localises to the cytoplasm. The catalysed reaction is [ThiI sulfur-carrier protein]-S-sulfanyl-L-cysteine + a uridine in tRNA + 2 reduced [2Fe-2S]-[ferredoxin] + ATP + H(+) = [ThiI sulfur-carrier protein]-L-cysteine + a 4-thiouridine in tRNA + 2 oxidized [2Fe-2S]-[ferredoxin] + AMP + diphosphate. It catalyses the reaction [ThiS sulfur-carrier protein]-C-terminal Gly-Gly-AMP + S-sulfanyl-L-cysteinyl-[cysteine desulfurase] + AH2 = [ThiS sulfur-carrier protein]-C-terminal-Gly-aminoethanethioate + L-cysteinyl-[cysteine desulfurase] + A + AMP + 2 H(+). Its pathway is cofactor biosynthesis; thiamine diphosphate biosynthesis. In terms of biological role, catalyzes the ATP-dependent transfer of a sulfur to tRNA to produce 4-thiouridine in position 8 of tRNAs, which functions as a near-UV photosensor. Also catalyzes the transfer of sulfur to the sulfur carrier protein ThiS, forming ThiS-thiocarboxylate. This is a step in the synthesis of thiazole, in the thiamine biosynthesis pathway. The sulfur is donated as persulfide by IscS. The polypeptide is tRNA sulfurtransferase (Yersinia enterocolitica serotype O:8 / biotype 1B (strain NCTC 13174 / 8081)).